A 195-amino-acid polypeptide reads, in one-letter code: 3-isopropylmalate dehydratase small subunit (195 aa).

This sequence belongs to the LeuD family. LeuD type 1 subfamily. In terms of assembly, heterodimer of LeuC and LeuD.

The enzyme catalyses (2R,3S)-3-isopropylmalate = (2S)-2-isopropylmalate. It functions in the pathway amino-acid biosynthesis; L-leucine biosynthesis; L-leucine from 3-methyl-2-oxobutanoate: step 2/4. Its function is as follows. Catalyzes the isomerization between 2-isopropylmalate and 3-isopropylmalate, via the formation of 2-isopropylmaleate. In Salinispora tropica (strain ATCC BAA-916 / DSM 44818 / JCM 13857 / NBRC 105044 / CNB-440), this protein is 3-isopropylmalate dehydratase small subunit.